A 959-amino-acid polypeptide reads, in one-letter code: DNA translocase FtsK 1 (959 aa).

A run of 3 helical transmembrane segments spans residues 1 to 21 (MGLG…WRYV), 39 to 59 (IWLA…LTSG), and 83 to 103 (GWTG…PMVF). Over 104-959 (GHSWRQLLAR…REVIAPGGGD (856 aa)) the chain is Cytoplasmic. A disordered region spans residues 122–427 (PVQADARHDE…AAPPPPAVPA (306 aa)). The span at 126–136 (DARHDEADDGL) shows a compositional bias: basic and acidic residues. 2 stretches are compositionally biased toward low complexity: residues 220 to 229 (ATPKAATQAP) and 264 to 286 (APSA…DAPA). A compositionally biased stretch (pro residues) spans 287–298 (SAPPEPAEPSPP). Residues 333 to 379 (PEPEPEPEAETEVTPEAEAEPEAEPEAEAEPEAEAEAEAEAEAEPEA) show a composition bias toward acidic residues. Over residues 380 to 403 (EAPAPESVAPALQEAEAATAAEAP) the composition is skewed to low complexity. A FtsK domain is found at 605–814 (GNPVVTDLAR…FQVSSKIDSR (210 aa)). 625 to 630 (GSGKSV) provides a ligand contact to ATP.

Belongs to the FtsK/SpoIIIE/SftA family. In terms of assembly, homohexamer. Forms a ring that surrounds DNA.

It localises to the cell inner membrane. Essential cell division protein that coordinates cell division and chromosome segregation. The N-terminus is involved in assembly of the cell-division machinery. The C-terminus functions as a DNA motor that moves dsDNA in an ATP-dependent manner towards the dif recombination site, which is located within the replication terminus region. Translocation stops specifically at Xer-dif sites, where FtsK interacts with the Xer recombinase, allowing activation of chromosome unlinking by recombination. FtsK orienting polar sequences (KOPS) guide the direction of DNA translocation. FtsK can remove proteins from DNA as it translocates, but translocation stops specifically at XerCD-dif site, thereby preventing removal of XerC and XerD from dif. In Ralstonia nicotianae (strain ATCC BAA-1114 / GMI1000) (Ralstonia solanacearum), this protein is DNA translocase FtsK 1 (ftsK1).